The following is a 609-amino-acid chain: RAS guanyl-releasing protein 2 (609 aa).

Residue Ala-2 is the site of N-myristoyl glycine attachment. Residues 4-126 enclose the N-terminal Ras-GEF domain; sequence TLDLDKGCTV…SLIDIDSVPT (123 aa). Leu-7 carries S-palmitoyl cysteine lipidation. Phosphoserine is present on residues Ser-116, Ser-117, and Ser-147. Residues 154–387 form the Ras-GEF domain; that stretch reads EPMELAEHLT…YQLSLQREPR (234 aa). A disordered region spans residues 382–406; it reads LQREPRSKSSPTSPTSCTPPPRPPV. EF-hand domains follow at residues 426–461 and 455–490; these read HIEK…FPYL and RGNF…SSSV. Positions 439, 441, 443, 445, 450, 468, 470, 472, 474, and 479 each coordinate Ca(2+). The Phorbol-ester/DAG-type zinc-finger motif lies at 498-548; sequence VHNFQESNSLRPVACRHCKALILGIYKQGLKCRACGVNCHKQCKDRLSVEC. Ser-554 and Ser-576 each carry phosphoserine. The disordered stretch occupies residues 557–592; it reads LEGSAPSPSPMHSHHHRAFSFSLPRPGRRGSRPPEI.

It belongs to the RASGRP family. In terms of assembly, forms a signaling complex with RAP1 and BRAF. Interacts with RAP1. Interacts with F-actin. Post-translationally, isoform 2 is palmitoylated and myristoylated. In terms of tissue distribution, detected in platelets, neutrophils and T lymphocytes (at protein level). Expressed in brain where it is enriched in the striatum. Also expressed in the hematopoietic system. Detected in heart, brain, lung, placenta, liver, skeletal muscle and kidney.

The protein localises to the cytoplasm. It localises to the cytosol. The protein resides in the cell membrane. Its subcellular location is the synapse. It is found in the synaptosome. The protein localises to the cell projection. It localises to the ruffle membrane. With respect to regulation, isoform 1 and isoform 2 are differently regulated by calcium and DAG. Its function is as follows. Functions as a calcium- and DAG-regulated nucleotide exchange factor specifically activating Rap through the exchange of bound GDP for GTP. May also activate other GTPases such as RRAS, RRAS2, NRAS, KRAS but not HRAS. Functions in aggregation of platelets and adhesion of T-lymphocytes and neutrophils probably through inside-out integrin activation. May function in the muscarinic acetylcholine receptor M1/CHRM1 signaling pathway. This is RAS guanyl-releasing protein 2 (RASGRP2) from Homo sapiens (Human).